Here is a 320-residue protein sequence, read N- to C-terminus: D-amino-acid oxidase (320 aa).

The FAD site is built by alanine 13, glycine 14, valine 15, threonine 42, threonine 43, serine 44, glycine 48, and alanine 49. D-proline-binding residues include tyrosine 220 and arginine 274. D-serine contacts are provided by tyrosine 220 and arginine 274. FAD is bound by residues arginine 274, glycine 299, glycine 300, glycine 302, and threonine 304. Glycine 300 is a D-proline binding site. A D-serine-binding site is contributed by glycine 300.

The protein belongs to the DAMOX/DASOX family. FAD serves as cofactor.

Its subcellular location is the cytoplasm. The protein resides in the secreted. It is found in the cell wall. It catalyses the reaction a D-alpha-amino acid + O2 + H2O = a 2-oxocarboxylate + H2O2 + NH4(+). Its function is as follows. Catalyzes the oxidative deamination of D-amino acids with broad substrate specificity. Enables the organism to utilize D-amino acids as a source of nutrients. Enables the organism to utilize glycine as a carbon source. The protein is D-amino-acid oxidase of Mycobacterium tuberculosis (strain ATCC 25177 / H37Ra).